Reading from the N-terminus, the 462-residue chain is Receptor like protein 29 (462 aa).

An N-terminal signal peptide occupies residues 1-26; the sequence is MTMKRALPSPSSLLFFFLLITPLFLC. Residues 27-441 are Extracellular-facing; it reads QENRVSASMP…SQASRYYRSC (415 aa). N-linked (GlcNAc...) asparagine glycosylation occurs at Asn-139. LRR repeat units lie at residues 139-164, 165-188, 190-212, 213-236, 238-260, 261-284, 286-308, 309-331, 332-355, and 357-381; these read NSSLQQLSLRSNPSLSGQIPPRISSL, KSLQILTLSQNRLTGDIPPAIFSL, SLVHLDLSYNKLTGKIPLQLGNL, NNLVGLDLSYNSLTGTIPPTISQL, MLQKLDLSSNSLFGRIPEGVEKL, RSLSFMALSNNKLKGAFPKGISNL, SLQYFIMDNNPMFVALPVELGFL, PKLQELQLENSGYSGVIPESYTK, LTNLSSLSLANNRLTGEIPSGFES, and PHVFHLNLSRNLLIGVVPFDSSFLR. 3 N-linked (GlcNAc...) asparagine glycosylation sites follow: Asn-334, Asn-363, and Asn-416. Residues 442 to 462 traverse the membrane as a helical segment; sequence FFANALFPFALFLGLHQRWVL.

Belongs to the RLP family.

Its subcellular location is the cell membrane. This Arabidopsis thaliana (Mouse-ear cress) protein is Receptor like protein 29.